A 355-amino-acid chain; its full sequence is MSTFAIPRSVEWRETHVTILNQQKLPSIIEYIDLHTLEDVYEAIATLKVRGAPAIGITAAYGLALAALRYDTESLDEFRRRLKRDRDYLASARPTAVNLFWALDRLVTAAADALSVNEAKTTLVHEAIRIQVEDEDVCRRIGEHALSLFRPGERVMTICNAGSIATARYGTALAPFYLAKEKGIELSVYALETRPVLQGARLTAWELMQAGVDVTLITDNMAAQAIKAKGIGAIIVGADRIAQNGDTANKIGTFGLALLAKSFDIPFYVAAPLSTIDLTTKTGADIPIEERHPDEVTHIAGVRIAPEGVNVYNPAFDVTPNELITAIITEKGIIRGNYNATLPSLFTKEEQHETI.

Residues 50–52 (RGA), Arg-93, and Gln-198 each bind substrate. Asp-239 acts as the Proton donor in catalysis. A substrate-binding site is contributed by 249–250 (NK).

Belongs to the eIF-2B alpha/beta/delta subunits family. MtnA subfamily. Homodimer.

The catalysed reaction is 5-(methylsulfanyl)-alpha-D-ribose 1-phosphate = 5-(methylsulfanyl)-D-ribulose 1-phosphate. Its pathway is amino-acid biosynthesis; L-methionine biosynthesis via salvage pathway; L-methionine from S-methyl-5-thio-alpha-D-ribose 1-phosphate: step 1/6. Functionally, catalyzes the interconversion of methylthioribose-1-phosphate (MTR-1-P) into methylthioribulose-1-phosphate (MTRu-1-P). This is Methylthioribose-1-phosphate isomerase from Geobacillus kaustophilus (strain HTA426).